A 339-amino-acid chain; its full sequence is Transposase for insertion sequence element IS1086 (339 aa).

Residues aspartate 176 to leucine 329 form the Integrase catalytic domain.

The protein belongs to the transposase IS30 family.

Required for the transposition of the insertion element. The chain is Transposase for insertion sequence element IS1086 (IS1086) from Cupriavidus metallidurans (strain ATCC 43123 / DSM 2839 / NBRC 102507 / CH34) (Ralstonia metallidurans).